Reading from the N-terminus, the 193-residue chain is Phosphoheptose isomerase (193 aa).

The region spanning 37-193 (LADSFKAGGK…QLIEKEMVKA (157 aa)) is the SIS domain. 52–54 (NGG) provides a ligand contact to substrate. Zn(2+) contacts are provided by His61 and Glu65. Substrate-binding positions include Glu65, 93-94 (ND), 119-121 (STS), Ser124, and Gln172. Zn(2+)-binding residues include Gln172 and His180.

This sequence belongs to the SIS family. GmhA subfamily. As to quaternary structure, homotetramer. Zn(2+) serves as cofactor.

The protein resides in the cytoplasm. The enzyme catalyses 2 D-sedoheptulose 7-phosphate = D-glycero-alpha-D-manno-heptose 7-phosphate + D-glycero-beta-D-manno-heptose 7-phosphate. It participates in carbohydrate biosynthesis; D-glycero-D-manno-heptose 7-phosphate biosynthesis; D-glycero-alpha-D-manno-heptose 7-phosphate and D-glycero-beta-D-manno-heptose 7-phosphate from sedoheptulose 7-phosphate: step 1/1. Functionally, catalyzes the isomerization of sedoheptulose 7-phosphate in D-glycero-D-manno-heptose 7-phosphate. The chain is Phosphoheptose isomerase from Yersinia pseudotuberculosis serotype O:1b (strain IP 31758).